The sequence spans 299 residues: Ribosomal RNA small subunit methyltransferase H (299 aa).

S-adenosyl-L-methionine is bound by residues 35-37, aspartate 54, tyrosine 80, aspartate 101, and glutamine 108; that span reads GGH.

Belongs to the methyltransferase superfamily. RsmH family.

Its subcellular location is the cytoplasm. It catalyses the reaction cytidine(1402) in 16S rRNA + S-adenosyl-L-methionine = N(4)-methylcytidine(1402) in 16S rRNA + S-adenosyl-L-homocysteine + H(+). In terms of biological role, specifically methylates the N4 position of cytidine in position 1402 (C1402) of 16S rRNA. The protein is Ribosomal RNA small subunit methyltransferase H of Coprothermobacter proteolyticus (strain ATCC 35245 / DSM 5265 / OCM 4 / BT).